We begin with the raw amino-acid sequence, 96 residues long: (4S)-4-hydroxy-5-phosphonooxypentane-2,3-dione isomerase (96 aa).

The region spanning 2–91 (HVTLVEINVH…MTGPRKKRLF (90 aa)) is the ABM domain.

It belongs to the LsrG family. Homodimer.

It is found in the cytoplasm. The catalysed reaction is (2S)-2-hydroxy-3,4-dioxopentyl phosphate = 3-hydroxy-2,4-dioxopentyl phosphate. Its function is as follows. Involved in the degradation of phospho-AI-2, thereby terminating induction of the lsr operon and closing the AI-2 signaling cycle. Catalyzes the conversion of (4S)-4-hydroxy-5-phosphonooxypentane-2,3-dione (P-DPD) to 3-hydroxy-5-phosphonooxypentane-2,4-dione (P-HPD). This chain is (4S)-4-hydroxy-5-phosphonooxypentane-2,3-dione isomerase, found in Escherichia coli O9:H4 (strain HS).